The sequence spans 288 residues: tRNA dimethylallyltransferase (288 aa).

17–24 (GPTASGKS) contributes to the ATP binding site. Substrate is bound at residue 19 to 24 (TASGKS).

It belongs to the IPP transferase family. Monomer. It depends on Mg(2+) as a cofactor.

The catalysed reaction is adenosine(37) in tRNA + dimethylallyl diphosphate = N(6)-dimethylallyladenosine(37) in tRNA + diphosphate. Functionally, catalyzes the transfer of a dimethylallyl group onto the adenine at position 37 in tRNAs that read codons beginning with uridine, leading to the formation of N6-(dimethylallyl)adenosine (i(6)A). This chain is tRNA dimethylallyltransferase, found in Ruegeria sp. (strain TM1040) (Silicibacter sp.).